The primary structure comprises 397 residues: MLGQAVLFTTFLLLRAHQGQDCPDSSEEVVGVSGKPVQLRPSNIQTKDVSVQWKKTEQGSHRKIEILNWYNDGPSWSNVSFSDIYGFDYGDFALSIKSAKLQDSGHYLLEITNTGGKVCNKNFQLLILDHVETPNLKAQWKPWTNGTCQLFLSCLVTKDDNVSYALYRGSTLISNQRNSTHWENQIDASSLHTYTCNVSNRASWANHTLNFTHGCQSVPSNFRFLPFGVIIVILVTLFLGAIICFCVWTKKRKQLQFSPKEPLTIYEYVKDSRASRDQQGCSRASGSPSAVQEDGRGQRELDRRVSEVLEQLPQQTFPGDRGTMYSMIQCKPSDSTSQEKCTVYSVVQPSRKSGSKKRNQNSSLSCTVYEEVGNPWLKAHNPARLSRRELENFDVYS.

Positions 1–19 (MLGQAVLFTTFLLLRAHQG) are cleaved as a signal peptide. Residues 20-226 (QDCPDSSEEV…SVPSNFRFLP (207 aa)) lie on the Extracellular side of the membrane. A disulfide bridge links Cys-22 with Cys-119. Ig-like domains follow at residues 22-129 (CPDS…LILD) and 131-215 (VETP…THGC). Residues Asn-78, Asn-145, Asn-161, Asn-178, Asn-197, Asn-206, and Asn-210 are each glycosylated (N-linked (GlcNAc...) asparagine). Cys-154 and Cys-196 are disulfide-bonded. Residues 227–247 (FGVIIVILVTLFLGAIICFCV) form a helical membrane-spanning segment. The Cytoplasmic segment spans residues 248 to 397 (WTKKRKQLQF…RELENFDVYS (150 aa)). An ITSM 1 motif is present at residues 264–269 (TIYEYV). Position 266 is a phosphotyrosine (Tyr-266). The segment covering 277–290 (DQQGCSRASGSPSA) has biased composition (polar residues). Residues 277 to 300 (DQQGCSRASGSPSAVQEDGRGQRE) form a disordered region. 3 consecutive short sequence motifs (ITSM) follow at residues 323–328 (TMYSMI), 342–347 (TVYSVV), and 367–372 (TVYEEV). At Tyr-325 the chain carries Phosphotyrosine; by FYN. Residue Tyr-344 is modified to Phosphotyrosine. Tyr-369 bears the Phosphotyrosine; by FYN mark.

In terms of assembly, interacts with CD48. Interacts (via phosphorylated ITSM 1-4) with SH2D1A/SAP (via SH2 domain); SH2D1A probably mediates association with FYN. Interacts (via phosphorylated ITSM 3) with PTPN11/SHP-2, INPP5D/SHIP1, PTPN6/SHP-1 and CSK; binding of SH2D1A prevents association with PTPN11, PTPN6 and CSK. Interacts weakly (via phosphorylated ITSM 2) with PTPN11 and CSK. Interacts with SH2D1B and SH2D1B2. Interacts with MHC class I proteins; the interaction is proposed to prevent self-killing of NK cells. Post-translationally, N-linked glycosylation is essential for the binding to its ligand CD48. Also O-glycosylated, in contrast, O-linked sialylation has a negative impact on ligand binding. Phosphorylated by FYN and CSK on tyrosine residues following activation. Coligation with inhibitory receptors such as KIR2DL1 inhibits phosphorylation upon contact of NK cells with sensitive target cells. In terms of tissue distribution, expressed in natural killer (NK) cells, T cells and dendritic cells.

It localises to the membrane. It is found in the cell membrane. The protein resides in the membrane raft. Heterophilic receptor of the signaling lymphocytic activation molecule (SLAM) family; its ligand is CD48. SLAM receptors triggered by homo- or heterotypic cell-cell interactions are modulating the activation and differentiation of a wide variety of immune cells and thus are involved in the regulation and interconnection of both innate and adaptive immune response. Activities are controlled by presence or absence of small cytoplasmic adapter proteins, SH2D1A/SAP and/or SH2D1B/EAT-2. Acts as activating natural killer (NK) cell receptor. Activating function implicates association with SH2D1A and FYN. Downstreaming signaling involves predominantly VAV1, and, to a lesser degree, INPP5D/SHIP1 and CBL. Signal attenuation in the absence of SH2D1A is proposed to be dependent on INPP5D and to a lesser extent PTPN6/SHP-1 and PTPN11/SHP-2. Stimulates NK cell cytotoxicity, production of IFN-gamma and granule exocytosis. Optimal expansion and activation of NK cells seems to be dependent on the engagement of CD244 with CD48 expressed on neighboring NK cells. Regulation of NK cell activity by adapters Sh2d1b and Sh2d1b2 is reported conflictingly. Acts as costimulator in NK activation by enhancing signals by other NK receptors such as NCR3 and NCR1. At early stages of NK cell differentiation may function as an inhibitory receptor possibly ensuring the self-tolerance of developing NK cells. Involved in the regulation of CD8(+) T-cell proliferation; expression on activated T-cells and binding to CD48 provides costimulatory-like function for neighboring T-cells. Inhibits inflammatory responses in dendritic cells (DCs). In Mus musculus (Mouse), this protein is Natural killer cell receptor 2B4 (Cd244).